The chain runs to 210 residues: Thymidylate kinase (210 aa).

10–17 (GPEGAGKS) is a binding site for ATP.

It belongs to the thymidylate kinase family.

The enzyme catalyses dTMP + ATP = dTDP + ADP. Its function is as follows. Phosphorylation of dTMP to form dTDP in both de novo and salvage pathways of dTTP synthesis. This is Thymidylate kinase from Ectopseudomonas mendocina (strain ymp) (Pseudomonas mendocina).